Reading from the N-terminus, the 152-residue chain is Em-like protein GEA1 (152 aa).

2 stretches are compositionally biased toward basic and acidic residues: residues 1-17 (MASK…KAKQ) and 32-63 (EAQE…IGHK). The tract at residues 1 to 63 (MASKQLSREE…HEGYQEIGHK (63 aa)) is disordered. A run of 4 repeats spans residues 44-63 (GGQT…IGHK), 64-83 (GGEA…MGHK), 84-103 (GGEA…MGHK), and 104-123 (GGEA…MGRK). A 4 X 20 AA tandem repeats region spans residues 44-123 (GGQTRKEQLG…HEGYKEMGRK (80 aa)). Positions 116–152 (GYKEMGRKGGLSTMEKSGGERAEEEGIEIDESKFTNK) are disordered.

It belongs to the small hydrophilic plant seed protein family. In terms of tissue distribution, in seeds only. Specifically located to vascular bundles in the cotyledon and axis of the dry seed. Also found in the epiderm and outer layers of the cortex in the embryo axis.

It is thought to provide protection for the cytoplasm during the desiccation stage of embryo development. The polypeptide is Em-like protein GEA1 (EM1) (Arabidopsis thaliana (Mouse-ear cress)).